The chain runs to 357 residues: Ubiquitin carboxyl-terminal hydrolase 2 (357 aa).

A USP domain is found at 19–351 (TGLRNLGNTC…DAYLLFYELA (333 aa)). Cys28 serves as the catalytic Nucleophile. The Zn(2+) site is built by Cys177, Cys180, Cys228, and Cys231. The Proton acceptor role is filled by His309.

Belongs to the peptidase C19 family. USP2 subfamily. In terms of assembly, homooligomer.

It localises to the cytoplasm. The protein resides in the perinuclear region. The enzyme catalyses Thiol-dependent hydrolysis of ester, thioester, amide, peptide and isopeptide bonds formed by the C-terminal Gly of ubiquitin (a 76-residue protein attached to proteins as an intracellular targeting signal).. In terms of biological role, hydrolase that deubiquitinates polyubiquitinated target proteins such as MDM2, MDM4 and CCND1. Possesses both ubiquitin-specific peptidase and isopeptidase activities. May play a role in the regulation of the circadian clock. The protein is Ubiquitin carboxyl-terminal hydrolase 2 (USP2) of Gallus gallus (Chicken).